A 399-amino-acid chain; its full sequence is Argininosuccinate synthase (399 aa).

ATP-binding positions include 10–18 (AYSGGVDTS) and Ala38. Position 89 (Tyr89) interacts with L-citrulline. Gly119 serves as a coordination point for ATP. Residues Thr121, Asn125, and Asp126 each contribute to the L-aspartate site. Asn125 is a binding site for L-citrulline. Arg129, Ser177, Ser186, Glu262, and Tyr274 together coordinate L-citrulline.

Belongs to the argininosuccinate synthase family. Type 1 subfamily. As to quaternary structure, homotetramer.

It is found in the cytoplasm. The catalysed reaction is L-citrulline + L-aspartate + ATP = 2-(N(omega)-L-arginino)succinate + AMP + diphosphate + H(+). The protein operates within amino-acid biosynthesis; L-arginine biosynthesis; L-arginine from L-ornithine and carbamoyl phosphate: step 2/3. This chain is Argininosuccinate synthase, found in Picosynechococcus sp. (strain ATCC 27264 / PCC 7002 / PR-6) (Agmenellum quadruplicatum).